The chain runs to 804 residues: MTNSNSITPVMQQYVTLKQQYKEYLLFYRLGDFYELFFDDAIKTSKILNIVLTKKGNVPMCGVPFHSSETYLNKLVKLGYKIAICEQLETSEEARKRGYKSLVKRDVVRIVTPGTIVEDSLLEAKESNYLACIVRIKDSCAIAWLELSTGLFCYHMTHISKLDSDLLRIGPKELLVADDLLEIEAVYSIIKKYRFSITQYSSSFFDENRAYNTLCNVYGVSTLKGLGDLKGVEISVCGSLLEYVIATQKGSLPKLGFPKAYVQSDFMFIDAAALRNLELFSTQSGELEGSLIASIDFTVTASGGRLLKRCLSAPLASADAINRRLSAVEFFVNNQNLYKSVRQVLRGIADIERILTRVKIARCSPKDLYSLKLTLEKTYELVELLCKFNIDIISEFCSRLGRYEDLICILNNSLLQNSVSSVKDGGFINPECDAQLSEYIYIQECSNQLIQELRDRYRNITNIQSLKILYNNILGYYVEVSSNHLIDDKNFIHRQSLANNVRYTTTELKELESKIISAKDASISLEIKIFGQLCSDVIKYADKITITAHAIAEIDMLTSFAELAVQYSYSKPIIDDSYEFNIKKGKHPVVERNGKFITNDINLSSEQRVHLITGPNMAGKSTFLRQNALIGILAHIGSFVPAEYAHIGVIDKVFSRVGASDNIVCGYSTFMVEMIETAAVINQATERSFVILDEIGRGTGTYDGLSIAWSVIEQIHNVNKSRAIFATHYHELSKLDKYLKHIKCFCMKVEEWDGKVVFLHEIIPGASDKSYGIHVAKLAGFPQSVVNRAEYLMDKLKTNEDLLT.

Position 614-621 (614-621) interacts with ATP; sequence GPNMAGKS.

Belongs to the DNA mismatch repair MutS family.

In terms of biological role, this protein is involved in the repair of mismatches in DNA. It is possible that it carries out the mismatch recognition step. This protein has a weak ATPase activity. This is DNA mismatch repair protein MutS from Ehrlichia ruminantium (strain Gardel).